The chain runs to 27 residues: Delta-actitoxin-Avd2a (27 aa).

3 disulfide bridges follow: Cys-3–Cys-17, Cys-4–Cys-11, and Cys-6–Cys-22.

It belongs to the sea anemone short toxin (type III) family.

The protein localises to the secreted. It is found in the nematocyst. Its function is as follows. Specific arthropod (crab and insect) toxin that inhibits inactivation of voltage-gated sodium channels. It competes well with the site-3 toxin LqhalphaIT (from the scorpion L.quinquestriatus (AC P17728)) on binding to cockroach neuronal membranes (Ki=21.4 nM), and inhibits the inactivation of D.melanogaster channel (DmNav1), but not that of mammalian Navs expressed in Xenopus oocytes. Its activity is synergically enhanced by ligands of receptor site-4 (Bj-xtrIT (AC P56637)). Its ability to inhibit the channel mutant DmNav1[D1701R] only decreases 5-fold, whereas the inhibition activity is completely lost by LqhalphaIT and Av2 when tested on DmNav1[D1701R]. The polypeptide is Delta-actitoxin-Avd2a (Anemonia sulcata (Mediterranean snakelocks sea anemone)).